Reading from the N-terminus, the 611-residue chain is Ankyrin repeat protein SKIP35 (611 aa).

ANK repeat units follow at residues 292–322, 323–353, 356–384, 385–414, 416–442, and 445–478; these read LFSNSFDPGWASGMSATVIQGLLGMLVEGGA, DNVNQCFLEASRFGSTELVRVLLQIAQRNSL, DVDLALGFASHYCKIGTMKCLVEEGNAIA, FLGPLMRAAERGCMQVVQWFVKRGCRDMEL, LALTAATSSCQVEVAAYLLPRVPPPVL, and LSIEILKAAGERSGGSLQGVEFLLKSDFLGDSTA.

In terms of assembly, interacts with SKP1A/ASK1.

This chain is Ankyrin repeat protein SKIP35 (SKIP35), found in Arabidopsis thaliana (Mouse-ear cress).